Here is a 1401-residue protein sequence, read N- to C-terminus: Protein dispatched homolog 2 (1401 aa).

Disordered regions lie at residues 1–91 and 113–138; these read MDGD…LAPA and DRAALCSHGSSLSPSPAPSQRDGTWK. A helical transmembrane segment spans residues 170–190; sequence VAVLMLCLAVIFLCTLAGLLG. Asn-239 carries N-linked (GlcNAc...) asparagine glycosylation. Residues 241-264 form a disordered region; sequence SSSHNTLRPAPRGSAQESAVRPRR. N-linked (GlcNAc...) asparagine glycans are attached at residues Asn-349 and Asn-465. The 173-residue stretch at 471-643 folds into the SSD domain; it reads GMDLGLKQEL…LVWLPASAVL (173 aa). Transmembrane regions (helical) follow at residues 484-504, 510-530, 542-562, 589-609, 617-637, 704-724, 964-984, 990-1010, 1019-1039, 1064-1084, and 1088-1108; these read FLVQDTVYPLLALVAIFFGMA, LFLTLMVLLGVLGSLLVAFFL, FVNLAALLLLSSVCANHTLIF, FGYLLLVSGLTTSAAFYASYL, CLALFMGTAVLVHLALTLVWL, YIWICWFAALAAGGAYIAGVS, PAVVLGLALALAFATLLLGTW, LFSVAAVAGTVLLTVGLLVLL, ALFLSASVGLSVDFTVNYCIS, AVGAAALFAAGVLMLPATVLL, and LGIILMMVKCVSCGFASFFFQ. Disordered stretches follow at residues 1169-1192, 1229-1337, and 1352-1401; these read ARRRSPSFDTSTATSKLSHRPSVL, PALQ…NGKR, and SLPA…GYSS. Polar residues predominate over residues 1175–1184; it reads SFDTSTATSK. Residues 1259–1270 are compositionally biased toward low complexity; sequence PLPASPEAPAHS. Polar residues predominate over residues 1284 to 1305; sequence SSASTLEGLSVSDETCLSTSEP. A compositionally biased stretch (low complexity) spans 1352–1362; it reads SLPASHHSSLS. Arg-1366 is subject to Omega-N-methylarginine.

The protein belongs to the dispatched family.

It is found in the membrane. This Homo sapiens (Human) protein is Protein dispatched homolog 2.